The primary structure comprises 286 residues: Bifunctional protein FolD (286 aa).

NADP(+) contacts are provided by residues 165–167 (GRS) and S190.

Belongs to the tetrahydrofolate dehydrogenase/cyclohydrolase family. Homodimer.

It catalyses the reaction (6R)-5,10-methylene-5,6,7,8-tetrahydrofolate + NADP(+) = (6R)-5,10-methenyltetrahydrofolate + NADPH. The enzyme catalyses (6R)-5,10-methenyltetrahydrofolate + H2O = (6R)-10-formyltetrahydrofolate + H(+). Its pathway is one-carbon metabolism; tetrahydrofolate interconversion. Its function is as follows. Catalyzes the oxidation of 5,10-methylenetetrahydrofolate to 5,10-methenyltetrahydrofolate and then the hydrolysis of 5,10-methenyltetrahydrofolate to 10-formyltetrahydrofolate. The sequence is that of Bifunctional protein FolD from Staphylococcus aureus (strain JH9).